The sequence spans 392 residues: Pectate lyase 3 (392 aa).

A signal peptide spans 1 to 25; the sequence is MGIKHCCYILYFTLALVTLLQPVRS. N37 is a glycosylation site (N-linked (GlcNAc...) asparagine). A disulfide bond links C54 and C71. Positions 194, 218, and 222 each coordinate Ca(2+). The active site involves R270.

The protein belongs to the polysaccharide lyase 1 family. Amb a subfamily. As to quaternary structure, monomer. The cofactor is Ca(2+). The N-terminus is blocked. Pollen and flowers.

The enzyme catalyses Eliminative cleavage of (1-&gt;4)-alpha-D-galacturonan to give oligosaccharides with 4-deoxy-alpha-D-galact-4-enuronosyl groups at their non-reducing ends.. Its pathway is glycan metabolism; pectin degradation; 2-dehydro-3-deoxy-D-gluconate from pectin: step 2/5. In terms of biological role, has pectate lyase activity. The sequence is that of Pectate lyase 3 from Ambrosia artemisiifolia (Common ragweed).